Consider the following 205-residue polypeptide: Large ribosomal subunit protein uL18 (205 aa).

This sequence belongs to the universal ribosomal protein uL18 family. In terms of assembly, part of the 50S ribosomal subunit. Contacts the 5S and 23S rRNAs.

Functionally, this is one of the proteins that bind and probably mediate the attachment of the 5S RNA into the large ribosomal subunit, where it forms part of the central protuberance. This Pyrobaculum arsenaticum (strain DSM 13514 / JCM 11321 / PZ6) protein is Large ribosomal subunit protein uL18.